The following is a 55-amino-acid chain: UPF0434 protein Erum1340/ERWE_CDS_01300 (55 aa).

This sequence belongs to the UPF0434 family.

In Ehrlichia ruminantium (strain Welgevonden), this protein is UPF0434 protein Erum1340/ERWE_CDS_01300.